The sequence spans 109 residues: uncharacterized protein (109 aa).

Residues 77 to 98 (TRTGHAYPRFTRPSFPSCNRNG) are disordered.

This is an uncharacterized protein from Homo sapiens (Human).